An 85-amino-acid chain; its full sequence is UPF0335 protein BQ12070 (85 aa).

The protein belongs to the UPF0335 family.

The protein is UPF0335 protein BQ12070 of Bartonella quintana (strain Toulouse) (Rochalimaea quintana).